The primary structure comprises 181 residues: Ferritin heavy chain (181 aa).

Met-1 bears the N-acetylmethionine mark. An N-acetylthreonine; in Ferritin heavy chain, N-terminally processed modification is found at Thr-2. One can recognise a Ferritin-like diiron domain in the interval Gln-11 to Gly-160. The Fe cation site is built by Glu-28, Glu-63, His-66, Glu-108, and Gln-142. Ser-179 is modified (phosphoserine).

This sequence belongs to the ferritin family. As to quaternary structure, oligomer of 24 subunits. There are two types of subunits: L (light) chain and H (heavy) chain. The major chain can be light or heavy, depending on the species and tissue type. The functional molecule forms a roughly spherical shell with a diameter of 12 nm and contains a central cavity into which the insoluble mineral iron core is deposited. Interacts with NCOA4; NCOA4 promotes targeting of the iron-binding ferritin complex to autolysosomes following starvation or iron depletion.

The protein localises to the cytoplasm. It localises to the lysosome. Its subcellular location is the cytoplasmic vesicle. The protein resides in the autophagosome. It catalyses the reaction 4 Fe(2+) + O2 + 4 H(+) = 4 Fe(3+) + 2 H2O. Stores iron in a soluble, non-toxic, readily available form. Important for iron homeostasis. Has ferroxidase activity. Iron is taken up in the ferrous form and deposited as ferric hydroxides after oxidation. Also plays a role in delivery of iron to cells. Mediates iron uptake in capsule cells of the developing kidney. Delivery to lysosomes is mediated by the cargo receptor NCOA4 for autophagic degradation and release of iron. This is Ferritin heavy chain (FTH1) from Bos taurus (Bovine).